A 70-amino-acid polypeptide reads, in one-letter code: Large ribosomal subunit protein bL31 (70 aa).

Zn(2+) contacts are provided by Cys-16, Cys-18, Cys-37, and Cys-40.

Belongs to the bacterial ribosomal protein bL31 family. Type A subfamily. In terms of assembly, part of the 50S ribosomal subunit. Zn(2+) is required as a cofactor.

In terms of biological role, binds the 23S rRNA. The polypeptide is Large ribosomal subunit protein bL31 (Shewanella baltica (strain OS223)).